Reading from the N-terminus, the 192-residue chain is dTTP/UTP pyrophosphatase (192 aa).

Asp70 (proton acceptor) is an active-site residue.

The protein belongs to the Maf family. YhdE subfamily. It depends on a divalent metal cation as a cofactor.

The protein resides in the cytoplasm. The catalysed reaction is dTTP + H2O = dTMP + diphosphate + H(+). It carries out the reaction UTP + H2O = UMP + diphosphate + H(+). In terms of biological role, nucleoside triphosphate pyrophosphatase that hydrolyzes dTTP and UTP. May have a dual role in cell division arrest and in preventing the incorporation of modified nucleotides into cellular nucleic acids. The polypeptide is dTTP/UTP pyrophosphatase (Alkaliphilus metalliredigens (strain QYMF)).